The following is a 555-amino-acid chain: CTP synthase (555 aa).

Residues Met-1 to Val-277 are amidoligase domain. Ser-26 provides a ligand contact to CTP. Residue Ser-26 participates in UTP binding. ATP is bound at residue Gly-27 to Ile-32. L-glutamine is bound at residue Tyr-67. ATP is bound at residue Asp-84. Asp-84 and Glu-152 together coordinate Mg(2+). CTP is bound by residues Asp-159–Glu-161, Lys-198–Gln-203, and Lys-234. Residues Lys-198–Gln-203 and Lys-234 each bind UTP. Residues Leu-307–Ala-542 form the Glutamine amidotransferase type-1 domain. L-glutamine is bound at residue Gly-364. Residue Cys-391 is the Nucleophile; for glutamine hydrolysis of the active site. L-glutamine is bound by residues Leu-392 to Gln-395, Glu-415, and Arg-472. Catalysis depends on residues His-515 and Glu-517.

It belongs to the CTP synthase family. In terms of assembly, homotetramer.

The enzyme catalyses UTP + L-glutamine + ATP + H2O = CTP + L-glutamate + ADP + phosphate + 2 H(+). It carries out the reaction L-glutamine + H2O = L-glutamate + NH4(+). The catalysed reaction is UTP + NH4(+) + ATP = CTP + ADP + phosphate + 2 H(+). It functions in the pathway pyrimidine metabolism; CTP biosynthesis via de novo pathway; CTP from UDP: step 2/2. With respect to regulation, allosterically activated by GTP, when glutamine is the substrate; GTP has no effect on the reaction when ammonia is the substrate. The allosteric effector GTP functions by stabilizing the protein conformation that binds the tetrahedral intermediate(s) formed during glutamine hydrolysis. Inhibited by the product CTP, via allosteric rather than competitive inhibition. Functionally, catalyzes the ATP-dependent amination of UTP to CTP with either L-glutamine or ammonia as the source of nitrogen. Regulates intracellular CTP levels through interactions with the four ribonucleotide triphosphates. In Haloquadratum walsbyi (strain DSM 16790 / HBSQ001), this protein is CTP synthase.